The following is a 369-amino-acid chain: 5-amino-6-(D-ribitylamino)uracil--L-tyrosine 4-hydroxyphenyl transferase (369 aa).

The Radical SAM core domain maps to 56-292 (VTFVVNRNIN…AVARLYFGPL (237 aa)). The [4Fe-4S] cluster site is built by Cys-70, Cys-74, and Cys-77.

The protein belongs to the radical SAM superfamily. CofH family. In terms of assembly, consists of two subunits, CofG and CofH. The cofactor is [4Fe-4S] cluster.

It catalyses the reaction 5-amino-6-(D-ribitylamino)uracil + L-tyrosine + S-adenosyl-L-methionine = 5-amino-5-(4-hydroxybenzyl)-6-(D-ribitylimino)-5,6-dihydrouracil + 2-iminoacetate + 5'-deoxyadenosine + L-methionine + H(+). It participates in cofactor biosynthesis; coenzyme F0 biosynthesis. Functionally, catalyzes the radical-mediated synthesis of 5-amino-5-(4-hydroxybenzyl)-6-(D-ribitylimino)-5,6-dihydrouracil from 5-amino-6-(D-ribitylamino)uracil and L-tyrosine. This is 5-amino-6-(D-ribitylamino)uracil--L-tyrosine 4-hydroxyphenyl transferase from Methanopyrus kandleri (strain AV19 / DSM 6324 / JCM 9639 / NBRC 100938).